We begin with the raw amino-acid sequence, 469 residues long: Small ribosomal subunit protein mS29 (469 aa).

Position 150 (L150) interacts with ATP.

It belongs to the mitochondrion-specific ribosomal protein mS29 family. As to quaternary structure, component of the mitochondrial small ribosomal subunit (mt-SSU). Mature N.crassa 74S mitochondrial ribosomes consist of a small (37S) and a large (54S) subunit. The 37S small subunit contains a 16S ribosomal RNA (16S mt-rRNA) and 32 different proteins. The 54S large subunit contains a 23S rRNA (23S mt-rRNA) and 42 different proteins.

It is found in the mitochondrion. In terms of biological role, component of the mitochondrial ribosome (mitoribosome), a dedicated translation machinery responsible for the synthesis of mitochondrial genome-encoded proteins, including at least some of the essential transmembrane subunits of the mitochondrial respiratory chain. The mitoribosomes are attached to the mitochondrial inner membrane and translation products are cotranslationally integrated into the membrane. The protein is Small ribosomal subunit protein mS29 (rsm23) of Neurospora crassa (strain ATCC 24698 / 74-OR23-1A / CBS 708.71 / DSM 1257 / FGSC 987).